A 1140-amino-acid chain; its full sequence is GPI inositol-deacylase (1140 aa).

Residues 1 to 84 (MHRRSSGSSP…TTWASHDPPR (84 aa)) are disordered. A compositionally biased stretch (polar residues) spans 55-78 (GKSTPRSRNSSTWRTLSSATTTWA). An N-linked (GlcNAc...) asparagine glycan is attached at Asn-63. A helical membrane pass occupies residues 117-137 (SCSILTALTTILACVFLFSIV). The active site involves Ser-304. The helical transmembrane segment at 782 to 802 (LVMRYRTVFAAFPLLVVSLTL) threads the bilayer. The N-linked (GlcNAc...) asparagine glycan is linked to Asn-862. 7 helical membrane-spanning segments follow: residues 882–902 (AFFWFLVPLFGLICVGVCVLL), 905–925 (VALIVLQILSVVYGLWNSKSG), 952–972 (VLLVLVSTAIPYQFAYLVACI), 1002–1022 (SVFILMLWVLPINILVLLVWA), 1039–1059 (VLSIMPFIILVETMTTGSMIP), 1070–1090 (SVLLFCIAVYSAVYGVSYAYI), and 1094–1114 (LVNILAGWLVSIYFFRSGFSL).

This sequence belongs to the GPI inositol-deacylase family.

It is found in the endoplasmic reticulum membrane. In terms of biological role, involved in inositol deacylation of GPI-anchored proteins which plays important roles in the quality control and ER-associated degradation of GPI-anchored proteins. The sequence is that of GPI inositol-deacylase (bst1) from Emericella nidulans (strain FGSC A4 / ATCC 38163 / CBS 112.46 / NRRL 194 / M139) (Aspergillus nidulans).